A 417-amino-acid chain; its full sequence is uncharacterized protein (417 aa).

2 disordered regions span residues 1–41 and 233–262; these read MDSE…EDQA and QDSA…STRS. Over residues 31–41 the composition is skewed to basic and acidic residues; that stretch reads DEDHIFHEDQA. Residues 235 to 245 are compositionally biased toward polar residues; sequence SAYNDQAPSTS.

This is an uncharacterized protein from Caenorhabditis elegans.